Here is a 622-residue protein sequence, read N- to C-terminus: MAKLSVILLFRSLLLCGALTVSRHATLVTEREVQSSKYDFIVVGGGVSGLTVADRLTEIPDVSVLVIEAGPVDRGEDFVYVPGSYERDPYIWPGLTNEPSAELNNRVFDSVVARVAGGGSIVNAMIFLRGTALDFDGWESLGNHGWGWEGMLPYFIKSENFTRPTPELAHEGNITWDDSVRGHDGPVRYSYPNYIYPGLGRLYEAALHIGIQPRLDPNGGQNTGVFNQPFAIDAATWTRSSARRNHYDPAVSRPNYHFLSDTTVARVIFDGTRAVGVEYLPSRGGGISTAFAAKEVLVAAGALHTPQVLQLSGVGPRDLLEALNIPIISDLPGVGSNLQDQTTFPFVYTWDSAVTPNVTTFLTNTTWATEQRVLYDQHLPSVWTLTRPLAPKFAFLSYEDATANTAYASILDDAQARDPADSLPGDIHPTVLAGYAVQRQIMFNEFRDAGLAVGGMSWDTDANVQVFNVKPFSRGYVYINQTDPLANPVIDFRTASDPTDFQLHIALLHKQRELFNAPSLAALGPTEVVPGPAVQTDEDIIKLMREILQPSNGHQCCSAPMMPRELGGVLSPEMKVYGTTGLRVIDISHWPKELSGPPMASIYAAGEKAADIIKGEHGWLGN.

The first 18 residues, M1–A18, serve as a signal peptide directing secretion. FAD contacts are provided by residues V47–S48, E68–A69, and N123–I126. N160, N173, N357, N364, and N480 each carry an N-linked (GlcNAc...) asparagine glycan. P598–M599 contributes to the FAD binding site.

This sequence belongs to the GMC oxidoreductase family. In terms of assembly, homodimer. Requires FAD as cofactor.

It participates in secondary metabolite biosynthesis. In terms of biological role, dehydrogenase involved in the conversion of monodictyphenone to the prenyl xanthones such as emericellin, shamixanthone and epishamixanthone. Monodictyphenone is first converted to variecoxanthone A via a paeciloxanthone intermediate by the consecutive actions of the FAD-dependent monooxygenase mdpD and the xanthone prenyltransferase xptB. XptB catalyzes regular O-prenylation at the hydroxy group of C-7 of the xanthone ring. Variecoxanthone A is further prenylated to emericellin by xptA before being reduced to shamixanthone and epishamixanthone by the dehydrogenase xptC. This chain is Dehydrogenase xptC, found in Emericella nidulans (strain FGSC A4 / ATCC 38163 / CBS 112.46 / NRRL 194 / M139) (Aspergillus nidulans).